The sequence spans 202 residues: Imidazoleglycerol-phosphate dehydratase (202 aa).

This sequence belongs to the imidazoleglycerol-phosphate dehydratase family.

The protein resides in the cytoplasm. The catalysed reaction is D-erythro-1-(imidazol-4-yl)glycerol 3-phosphate = 3-(imidazol-4-yl)-2-oxopropyl phosphate + H2O. Its pathway is amino-acid biosynthesis; L-histidine biosynthesis; L-histidine from 5-phospho-alpha-D-ribose 1-diphosphate: step 6/9. This chain is Imidazoleglycerol-phosphate dehydratase, found in Sinorhizobium fredii (strain NBRC 101917 / NGR234).